Reading from the N-terminus, the 554-residue chain is Exonuclease V, mitochondrial (554 aa).

A mitochondrion-targeting transit peptide spans 1–17; sequence MLRCRSSINILQLHSRF. [4Fe-4S] cluster contacts are provided by Cys-138, Cys-522, Cys-525, and Cys-531.

The protein belongs to the EXO5 family. In terms of assembly, monomer. It depends on Mg(2+) as a cofactor. Requires [4Fe-4S] cluster as cofactor.

It is found in the mitochondrion. Functionally, single strand DNA specific 5'exonuclease involved in mitochondrial DNA replication and recombination. Releases dinucleotides as main products of catalysis. Has the capacity to slide across 5'double-stranded DNA or 5'RNA sequences and resumes cutting two nucleotides downstream of the double-stranded-to-single-stranded junction or RNA-to-DNA junction, respectively. This Vanderwaltozyma polyspora (strain ATCC 22028 / DSM 70294 / BCRC 21397 / CBS 2163 / NBRC 10782 / NRRL Y-8283 / UCD 57-17) (Kluyveromyces polysporus) protein is Exonuclease V, mitochondrial (EXO5).